A 444-amino-acid polypeptide reads, in one-letter code: MITIKKGLELPIAGGPEQVIHNGPAIRHVATLGEEYIGLRPTMKIKVGDKVQKGQVLFEDKKNLGVKYTALASGTILEINRGARRVLQSVVIAVEGDDSVAFAQYDADKLDTLDAQVVRDNLIDSGLWTALRTRPFSKVPAVDATAAGIFVTAIDTQPLAADPVVVIAQHKEDFANGLKVLARLTEGKVYLCKAQGADIPAANAQVQEFAGKHPAGLAGTHIHHVLPASATRTVWHIGYQDVIAFGQLFTQGVLNTERVVAIGGPKAKKPRLVRTVLGASMAELTADETVGDGVRVISGSVLSGRTAVGPQAYLGRYHQQVSVLEEGDEKELFGWAMPGVDKFSITRSFLGHLSPSRLFNMTTSTGGSDRAMVPIGNYERVMPLDILPTMLLRDLLSGDFDGAVRLGALELDEEDLALCTFVCPGKYDYGSYLRDCLDTIEREG.

Belongs to the NqrA family. As to quaternary structure, composed of six subunits; NqrA, NqrB, NqrC, NqrD, NqrE and NqrF.

The catalysed reaction is a ubiquinone + n Na(+)(in) + NADH + H(+) = a ubiquinol + n Na(+)(out) + NAD(+). In terms of biological role, NQR complex catalyzes the reduction of ubiquinone-1 to ubiquinol by two successive reactions, coupled with the transport of Na(+) ions from the cytoplasm to the periplasm. NqrA to NqrE are probably involved in the second step, the conversion of ubisemiquinone to ubiquinol. The protein is Na(+)-translocating NADH-quinone reductase subunit A of Shewanella frigidimarina (strain NCIMB 400).